Reading from the N-terminus, the 589-residue chain is ATP-dependent lipid A-core flippase (589 aa).

A run of 6 helical transmembrane segments spans residues 37 to 57, 72 to 92, 151 to 171, 173 to 193, 260 to 280, and 286 to 306; these read ALAI…PALL, LWLV…SGFL, IMKL…LVYL, WKLM…IQVL, SAIT…IALL, and TTTV…IAPV. Residues 37-318 form the ABC transmembrane type-1 domain; the sequence is ALAIGATIVA…LSDAATPVTR (282 aa). An ABC transporter domain is found at 350-584; it reads IEFADVSVIY…NGAYAHLYRL (235 aa). 384-391 serves as a coordination point for ATP; sequence GASGSGKT.

Belongs to the ABC transporter superfamily. Lipid exporter (TC 3.A.1.106) family. In terms of assembly, homodimer.

The protein resides in the cell inner membrane. The enzyme catalyses ATP + H2O + lipid A-core oligosaccharideSide 1 = ADP + phosphate + lipid A-core oligosaccharideSide 2.. Its function is as follows. Involved in lipopolysaccharide (LPS) biosynthesis. Translocates lipid A-core from the inner to the outer leaflet of the inner membrane. Transmembrane domains (TMD) form a pore in the inner membrane and the ATP-binding domain (NBD) is responsible for energy generation. The protein is ATP-dependent lipid A-core flippase of Polaromonas sp. (strain JS666 / ATCC BAA-500).